The chain runs to 369 residues: MQHLNIHGHTLTLRRFPHKPGCPLQAWDAADALALTNHALPDGEILILNDHFGALACGLAYPERTLEWVNDSYMAHQALAQNLQLNRIETPLHRTPALAASPTNPVGILIKLPRMLQLLSSQLDWLNLHLPKGTPVVIAARQKDMPSTLPDLTRRLLDDVHPSRAEKKARLIFGQLSGRQSGQAEITAWHCAELDCLLSHYPNVFGRQKLDLGARVLLQNLGTIPDQVVDLGCGNGVLSIAALQRNPNSHVLAVDESWQATRSCQINLERVRTPEHFKVVWGHSLSFIEGMQADLVLCNPPFHQHQTLTDDIAWCMFKDAHRVLKPGGRLRMVGNRHLGYHAKLHKLFGHCRSIAATPKFVVLESVKSS.

It belongs to the methyltransferase superfamily. RlmG family.

The protein resides in the cytoplasm. It carries out the reaction guanosine(1835) in 23S rRNA + S-adenosyl-L-methionine = N(2)-methylguanosine(1835) in 23S rRNA + S-adenosyl-L-homocysteine + H(+). Specifically methylates the guanine in position 1835 (m2G1835) of 23S rRNA. The protein is Ribosomal RNA large subunit methyltransferase G of Magnetococcus marinus (strain ATCC BAA-1437 / JCM 17883 / MC-1).